Reading from the N-terminus, the 372-residue chain is Glutamate 5-kinase (372 aa).

Lysine 14 is an ATP binding site. Substrate is bound by residues serine 54, aspartate 141, and asparagine 153. ATP-binding positions include threonine 173–aspartate 174 and threonine 215–lysine 221. The region spanning alanine 280–isoleucine 358 is the PUA domain.

Belongs to the glutamate 5-kinase family.

The protein resides in the cytoplasm. The catalysed reaction is L-glutamate + ATP = L-glutamyl 5-phosphate + ADP. Its pathway is amino-acid biosynthesis; L-proline biosynthesis; L-glutamate 5-semialdehyde from L-glutamate: step 1/2. Functionally, catalyzes the transfer of a phosphate group to glutamate to form L-glutamate 5-phosphate. In Chromobacterium violaceum (strain ATCC 12472 / DSM 30191 / JCM 1249 / CCUG 213 / NBRC 12614 / NCIMB 9131 / NCTC 9757 / MK), this protein is Glutamate 5-kinase.